The following is a 429-amino-acid chain: MEKLVIRGGKPLSGTVSVSGSKNSALAIMAAALLPASGKTVIHRVPNLRDVHTLSNLLRIIGAKVDFEAHTLSIASGDISHYEAPYELVKKMRASIYVLGPLLGRFGRAKVSLPGGCAFGPRPVDLHIESMKKLGADIKLEDGYIIAKTKRKGLSGAKIDFRISSVGATGNTLMAAALAKGTTCLTNAALEPEIVYLCEFLEKMGAKISGIGTTTLEIEGVDELYPIRADNICDRIEAGTLLAAAAITHGNITLTDVDPDHLTAILEKFKEIGCEVSTTETAITLSAPETLLPSNVEALPYPKFPTDMQAQWIALMTQANGISQIIDQVYTERFNHVPELNRLGGEITVKNNMATVHGVKPLSGAKVMSTDLRASASLILAGLAAKGTTEVLRVYHLDRGYESIEKKLRKLGARIRRQTYDEFAQPQLT.

Position 22-23 (22-23) interacts with phosphoenolpyruvate; that stretch reads KN. Arg-93 provides a ligand contact to UDP-N-acetyl-alpha-D-glucosamine. Cys-117 (proton donor) is an active-site residue. At Cys-117 the chain carries 2-(S-cysteinyl)pyruvic acid O-phosphothioketal. UDP-N-acetyl-alpha-D-glucosamine-binding positions include 122 to 126, Asp-307, and Val-329; that span reads RPVDL.

This sequence belongs to the EPSP synthase family. MurA subfamily.

The protein localises to the cytoplasm. The catalysed reaction is phosphoenolpyruvate + UDP-N-acetyl-alpha-D-glucosamine = UDP-N-acetyl-3-O-(1-carboxyvinyl)-alpha-D-glucosamine + phosphate. It participates in cell wall biogenesis; peptidoglycan biosynthesis. Functionally, cell wall formation. Adds enolpyruvyl to UDP-N-acetylglucosamine. The polypeptide is UDP-N-acetylglucosamine 1-carboxyvinyltransferase (Chloroherpeton thalassium (strain ATCC 35110 / GB-78)).